A 473-amino-acid chain; its full sequence is T-box transcription factor TBX6L (473 aa).

Positions 43-217 form a DNA-binding region, T-box; the sequence is LWDKFSSIGT…NNPFAKGFRD (175 aa). Residues 342 to 361 are disordered; it reads RLNPQETHHNSRPKIQLQPP.

Exclusively expressed by ventral mesendoderm.

The protein resides in the nucleus. In terms of biological role, probable transcriptional regulator involved in developmental processes. The polypeptide is T-box transcription factor TBX6L (tbx6l) (Danio rerio (Zebrafish)).